Reading from the N-terminus, the 1372-residue chain is DNA-directed RNA polymerase subunit beta' (1372 aa).

Zn(2+)-binding residues include cysteine 69, cysteine 71, cysteine 84, and cysteine 87. Aspartate 460, aspartate 462, and aspartate 464 together coordinate Mg(2+). Residues cysteine 808, cysteine 882, cysteine 889, and cysteine 892 each coordinate Zn(2+).

Belongs to the RNA polymerase beta' chain family. The RNAP catalytic core consists of 2 alpha, 1 beta, 1 beta' and 1 omega subunit. When a sigma factor is associated with the core the holoenzyme is formed, which can initiate transcription. It depends on Mg(2+) as a cofactor. Requires Zn(2+) as cofactor.

It carries out the reaction RNA(n) + a ribonucleoside 5'-triphosphate = RNA(n+1) + diphosphate. In terms of biological role, DNA-dependent RNA polymerase catalyzes the transcription of DNA into RNA using the four ribonucleoside triphosphates as substrates. This chain is DNA-directed RNA polymerase subunit beta', found in Rickettsia conorii (strain ATCC VR-613 / Malish 7).